A 124-amino-acid polypeptide reads, in one-letter code: Small ribosomal subunit protein eS25 (124 aa).

Positions 1-22 (PPKDDKKKKDAGKSAKKDKDPV) are enriched in basic and acidic residues. The interval 1–37 (PPKDDKKKKDAGKSAKKDKDPVNKSGGKAKKKKWSKG) is disordered. A compositionally biased stretch (basic residues) spans 27–37 (GKAKKKKWSKG). An N6-acetyllysine modification is found at Lys-42. Lys-51 carries the post-translational modification N6-acetyllysine; alternate. Lys-51 carries the post-translational modification N6-succinyllysine; alternate. An N6-acetyllysine mark is found at Lys-59 and Lys-65. Lys-93 bears the N6-acetyllysine; alternate mark. Lys-93 carries the post-translational modification N6-succinyllysine; alternate.

It belongs to the eukaryotic ribosomal protein eS25 family. As to quaternary structure, component of the small ribosomal subunit.

The protein resides in the cytoplasm. Component of the small ribosomal subunit. The ribosome is a large ribonucleoprotein complex responsible for the synthesis of proteins in the cell. The chain is Small ribosomal subunit protein eS25 (RPS25) from Oryctolagus cuniculus (Rabbit).